A 303-amino-acid chain; its full sequence is Ribosomal protein L11 methyltransferase (303 aa).

S-adenosyl-L-methionine is bound by residues threonine 152, glycine 173, aspartate 195, and asparagine 239.

This sequence belongs to the methyltransferase superfamily. PrmA family.

The protein resides in the cytoplasm. The enzyme catalyses L-lysyl-[protein] + 3 S-adenosyl-L-methionine = N(6),N(6),N(6)-trimethyl-L-lysyl-[protein] + 3 S-adenosyl-L-homocysteine + 3 H(+). Methylates ribosomal protein L11. The chain is Ribosomal protein L11 methyltransferase from Desulforapulum autotrophicum (strain ATCC 43914 / DSM 3382 / VKM B-1955 / HRM2) (Desulfobacterium autotrophicum).